Consider the following 543-residue polypeptide: Cobyric acid synthase (543 aa).

One can recognise a GATase cobBQ-type domain in the interval 260–483 (MLDIVLVDLP…LHGVFDADGF (224 aa)). Cys346 serves as the catalytic Nucleophile. Residue His475 is part of the active site.

The protein belongs to the CobB/CobQ family. CobQ subfamily.

The protein operates within cofactor biosynthesis; adenosylcobalamin biosynthesis. Its function is as follows. Catalyzes amidations at positions B, D, E, and G on adenosylcobyrinic A,C-diamide. NH(2) groups are provided by glutamine, and one molecule of ATP is hydrogenolyzed for each amidation. The polypeptide is Cobyric acid synthase (Nitratidesulfovibrio vulgaris (strain ATCC 29579 / DSM 644 / CCUG 34227 / NCIMB 8303 / VKM B-1760 / Hildenborough) (Desulfovibrio vulgaris)).